The following is a 343-amino-acid chain: Probable long-chain-alcohol O-fatty-acyltransferase 2 (343 aa).

Transmembrane regions (helical) follow at residues 7–27 (NLIKVWISALISISYCYYISS), 36–56 (LLSLLPIFIIFLLLPLFFSSV), 58–78 (FCVISGFFFTWLANFKLFLFA), 117–137 (PMSKWVLAFKLLIFSFLLHVY), 148–168 (FAFLALFTIHVYLEAELILVF), 235–255 (GMLATFIVSGLMHELIYFYVI), 260–280 (TWEVTCFFLLHGVVTCLEIAM), and 292–312 (AVSGLAITVFLLVTAGWLFYP).

This sequence belongs to the wax synthase family.

It localises to the membrane. It carries out the reaction a long chain fatty alcohol + a fatty acyl-CoA = a wax ester + CoA. In terms of biological role, catalyzes the final step in the synthesis of long-chain linear esters (waxes). This is Probable long-chain-alcohol O-fatty-acyltransferase 2 (AT2) from Arabidopsis thaliana (Mouse-ear cress).